A 146-amino-acid chain; its full sequence is Large ribosomal subunit protein uL15 (146 aa).

The tract at residues 1–51 (MQLNTLKPAEGSKKNRRRVGRGIGSGLGKTAGRGHKGQKSRSGGFHKVGFE) is disordered. Residues 21–31 (RGIGSGLGKTA) are compositionally biased toward gly residues.

It belongs to the universal ribosomal protein uL15 family. As to quaternary structure, part of the 50S ribosomal subunit.

Its function is as follows. Binds to the 23S rRNA. The protein is Large ribosomal subunit protein uL15 of Polynucleobacter asymbioticus (strain DSM 18221 / CIP 109841 / QLW-P1DMWA-1) (Polynucleobacter necessarius subsp. asymbioticus).